Consider the following 66-residue polypeptide: Large ribosomal subunit protein bL35 (66 aa).

Positions 1–16 (MPKQKTHRASAKRFKR) are enriched in basic residues. The segment at 1 to 20 (MPKQKTHRASAKRFKRTGSG) is disordered.

The protein belongs to the bacterial ribosomal protein bL35 family.

The protein is Large ribosomal subunit protein bL35 of Streptococcus thermophilus (strain CNRZ 1066).